Consider the following 504-residue polypeptide: Anaerobic nitric oxide reductase transcription regulator NorR (504 aa).

Asp57 carries the post-translational modification 4-aspartylphosphate. In terms of domain architecture, Sigma-54 factor interaction spans 187–416 (MIGLSPGMTQ…LEHAIHRAVV (230 aa)). Residues 215-222 (GETGTGKE) and 278-287 (ADNGTLFLDE) contribute to the ATP site. The segment at residues 479 to 498 (WAACARMLETDVANLHRLAK) is a DNA-binding region (H-T-H motif).

It participates in nitrogen metabolism; nitric oxide reduction. Required for the expression of anaerobic nitric oxide (NO) reductase, acts as a transcriptional activator for at least the norVW operon. Activation also requires sigma-54. In Shigella boydii serotype 4 (strain Sb227), this protein is Anaerobic nitric oxide reductase transcription regulator NorR.